Consider the following 648-residue polypeptide: Interferon-induced GTP-binding protein Mx1 (648 aa).

N-acetylmethionine is present on methionine 1. Residues 1–26 (MVHSDLGIEELDSPESSLNGSEDMES) are disordered. Positions 56-329 (DLALPAIAVI…LIMHICKTLP (274 aa)) constitute a Dynamin-type G domain. Positions 66–73 (GDQSSGKS) are G1 motif. Residue 66 to 73 (GDQSSGKS) participates in GTP binding. Positions 91–93 (VTR) are G2 motif. Residues 167-170 (DLPG) are G3 motif. GTP contacts are provided by residues 167 to 171 (DLPGI) and 236 to 239 (TKPD). The interval 236-239 (TKPD) is G4 motif. The interval 268–271 (KCRG) is G5 motif. A bundle signaling element (BSE) region spans residues 330–355 (LLENQIKETHQRITEELQKYGKDIPE). The interval 355–522 (EEESEKMFCL…HFQMEQLVYC (168 aa)) is middle domain. The tract at residues 356 to 618 (EESEKMFCLI…KDQYDWLLKE (263 aa)) is stalk. The interval 543–546 (KNKK) is critical for lipid-binding. Positions 560–648 (TDEIFQHLTA…ARQRLAKFPG (89 aa)) constitute a GED domain.

This sequence belongs to the TRAFAC class dynamin-like GTPase superfamily. Dynamin/Fzo/YdjA family. In terms of assembly, homooligomer. Oligomerizes into multimeric filamentous or ring-like structures by virtue of its stalk domain. Oligomerization is critical for GTPase activity, protein stability, and recognition of viral target structures. Interacts with TRPC1, TRPC3, TRPC4, TRPC5, TRPC6 and TRPC7. Interacts with HSPA5. Interacts with TUBB/TUBB5. Interacts with DDX39A and DDX39B. In terms of processing, ISGylated. As to expression, ubiquitously expressed.

The protein localises to the cytoplasm. It localises to the endoplasmic reticulum membrane. The protein resides in the perinuclear region. Its subcellular location is the nucleus. Its function is as follows. Interferon-induced dynamin-like GTPase with antiviral activity against rabies virus (RABV), vesicular stomatitis virus (VSV) and murine pneumonia virus (MPV). Isoform 1 but not isoform 2 shows antiviral activity against vesicular stomatitis virus (VSV). The chain is Interferon-induced GTP-binding protein Mx1 (MX1) from Bos taurus (Bovine).